Reading from the N-terminus, the 95-residue chain is MRSYETMYILSPDLSEEERKGLIERFKNLIIENGGEITNFDEWGKRKLAYLIDKKPEGYYVLMNFNSDSKVSQELERVYKITDGVLRYLIIRTDE.

The protein belongs to the bacterial ribosomal protein bS6 family.

In terms of biological role, binds together with bS18 to 16S ribosomal RNA. In Thermoanaerobacter pseudethanolicus (strain ATCC 33223 / 39E) (Clostridium thermohydrosulfuricum), this protein is Small ribosomal subunit protein bS6.